A 133-amino-acid polypeptide reads, in one-letter code: FPRL1 inhibitory protein (133 aa).

The N-terminal stretch at 1 to 28 (MKKNITKTIIASTVIAAGLLTQTNDAKA) is a signal peptide.

The protein belongs to the CHIPS/FLIPr family.

The protein resides in the secreted. Functionally, may be involved in countering the first line of host defense mechanisms. Impairs the leukocyte response to FPRL1 agonists by binding directly to host FPRL1. This Staphylococcus aureus (strain USA300) protein is FPRL1 inhibitory protein (flr).